We begin with the raw amino-acid sequence, 304 residues long: Urease accessory protein UreD 2 (304 aa).

It belongs to the UreD family. As to quaternary structure, ureD, UreF and UreG form a complex that acts as a GTP-hydrolysis-dependent molecular chaperone, activating the urease apoprotein by helping to assemble the nickel containing metallocenter of UreC. The UreE protein probably delivers the nickel.

The protein resides in the cytoplasm. Required for maturation of urease via the functional incorporation of the urease nickel metallocenter. In terms of biological role, disrupting the ure2 operon has no effect on urease activity or pathogen survival in BALB/c mice when administered orally. This Brucella abortus (strain 2308) protein is Urease accessory protein UreD 2.